A 299-amino-acid chain; its full sequence is Taste receptor type 2 member 19 (299 aa).

Met1 is a topological domain (extracellular). Residues 2-22 traverse the membrane as a helical segment; it reads MCFLLIILSILVVFAFVLGNF. Topologically, residues 23 to 55 are cytoplasmic; sequence SNGFIALVNVIDWVNTRKISSADQILTALVVSR. The chain crosses the membrane as a helical span at residues 56–76; that stretch reads IGLLWVMLFLWYATVFNSALY. At 77 to 87 the chain is on the extracellular side; it reads GLEVRIVASNA. A helical transmembrane segment spans residues 88-108; that stretch reads WAVMNHFSIWLAASLSIFCLL. Residues 109-127 lie on the Cytoplasmic side of the membrane; that stretch reads KIANFSNLIFLHLKKRIKS. A helical membrane pass occupies residues 128 to 148; that stretch reads VVLVILLGPLVFLICNLAVIT. Residues 149 to 181 lie on the Extracellular side of the membrane; sequence MDERVWTKEYEGNVTWKIKLRNAIQLSSLTVTT. Residue Asn161 is glycosylated (N-linked (GlcNAc...) asparagine). A helical transmembrane segment spans residues 182–202; sequence LANLIPFTLSLICFLLLICSL. Residues 203-226 lie on the Cytoplasmic side of the membrane; it reads CKHLKKMRLHSKGSQDPSTKVHIK. A helical membrane pass occupies residues 227–247; sequence ALQTVTSFLMLFAIYFLCIIT. The Extracellular portion of the chain corresponds to 248-259; the sequence is STWNLRTQQSKL. Residues 260–280 form a helical membrane-spanning segment; the sequence is VLLLCQTVAIMYPSFHSFILI. Over 281–299 the chain is Cytoplasmic; sequence MGSRKLKQTFLSVLWQMTR.

The protein belongs to the G-protein coupled receptor T2R family.

Its subcellular location is the membrane. Functionally, receptor that may play a role in the perception of bitterness and is gustducin-linked. May play a role in sensing the chemical composition of the gastrointestinal content. The activity of this receptor may stimulate alpha gustducin, mediate PLC-beta-2 activation and lead to the gating of TRPM5. The chain is Taste receptor type 2 member 19 (TAS2R19) from Pan paniscus (Pygmy chimpanzee).